The primary structure comprises 372 residues: Transcription factor MYB80 (372 aa).

2 HTH myb-type domains span residues 9–65 (KDNV…RPDL) and 66–116 (KHGE…KKKL). DNA-binding regions (H-T-H motif) lie at residues 37 to 61 (WRLI…TNYL) and 89 to 112 (WSVI…NTKL). The segment covering 298 to 311 (MWSHQSLYSGSSGT) has biased composition (polar residues). The interval 298–347 (MWSHQSLYSGSSGTEEARRELPEKGNDSVGSSGGDDDAADDGKDSGKGAA) is disordered. A compositionally biased stretch (basic and acidic residues) spans 312–323 (EEARRELPEKGN).

It localises to the nucleus. Functionally, essential for tapetum development in anthers and microsporogenesis. May regulate the timing of tapetal programmed cell death (PCD) which is critical for pollen development. The protein is Transcription factor MYB80 of Oryza sativa subsp. japonica (Rice).